A 144-amino-acid polypeptide reads, in one-letter code: Large ribosomal subunit protein uL15 (144 aa).

Residues 1–44 (MNLNELQPAAGSRKLRNRVGRGTSSGNGKTSGRGQKGQKARGKV) form a disordered region. Residues 23 to 35 (TSSGNGKTSGRGQ) show a composition bias toward gly residues.

It belongs to the universal ribosomal protein uL15 family. Part of the 50S ribosomal subunit.

Functionally, binds to the 23S rRNA. The chain is Large ribosomal subunit protein uL15 from Leuconostoc citreum (strain KM20).